The sequence spans 118 residues: MTDLIPLEQAHCLPRKGSDHKLGEARLAELLPQVPGWELAEAGMALTRTFRFADYYRTLAFVNALAWIAHREDHHPDLGVHYDRVVVRYSTHDVGGLSENDFICAAKTAQLYDQGITA.

Belongs to the pterin-4-alpha-carbinolamine dehydratase family.

It catalyses the reaction (4aS,6R)-4a-hydroxy-L-erythro-5,6,7,8-tetrahydrobiopterin = (6R)-L-erythro-6,7-dihydrobiopterin + H2O. The polypeptide is Putative pterin-4-alpha-carbinolamine dehydratase (phhB) (Xanthomonas axonopodis pv. citri (strain 306)).